The following is a 140-amino-acid chain: Phospholipase A2 (140 aa).

Positions 1–21 (MNPAHLLVLAAVCISLSGASS) are cleaved as a signal peptide. The propeptide occupies 22 to 27 (IAPQPL). Disulfide bonds link Cys38–Cys97, Cys52–Cys139, Cys54–Cys70, Cys69–Cys125, Cys76–Cys118, Cys86–Cys111, and Cys104–Cys116. N-linked (GlcNAc...) asparagine glycosylation is present at Asn39. The Ca(2+) site is built by Tyr53, Gly55, and Gly57. Residue His73 is part of the active site. Asp74 is a binding site for Ca(2+). Residue Asn107 is glycosylated (N-linked (GlcNAc...) asparagine). Asp119 is a catalytic residue.

The protein belongs to the phospholipase A2 family. Group I subfamily. D49 sub-subfamily. Ca(2+) is required as a cofactor. As to expression, expressed by the venom gland.

It is found in the secreted. It catalyses the reaction a 1,2-diacyl-sn-glycero-3-phosphocholine + H2O = a 1-acyl-sn-glycero-3-phosphocholine + a fatty acid + H(+). PLA2 catalyzes the calcium-dependent hydrolysis of the 2-acyl groups in 3-sn-phosphoglycerides. The chain is Phospholipase A2 from Micrurus altirostris (Uruguayan coral snake).